Reading from the N-terminus, the 390-residue chain is Lipid droplet-regulating VLDL assembly factor AUP1 homolog (390 aa).

At 1–32 (MASPEASSSGNTEDLRIEDLFHQKRNEDTIAK) the chain is on the cytoplasmic side. Residues 33-53 (IFSIIYAPVGLIILLIRVFLG) lie within the membrane without spanning it. Over 54–390 (FHTFIVACLL…NRQKYMNRDS (337 aa)) the chain is Cytoplasmic. A CUE domain is found at 305–347 (QMDECAMRIKQSFPSFHLSAIRRDLEKTRSQTTTVNNLKAGKI).

It belongs to the AUP1 family.

It localises to the endoplasmic reticulum membrane. It is found in the lipid droplet. The sequence is that of Lipid droplet-regulating VLDL assembly factor AUP1 homolog from Caenorhabditis elegans.